The chain runs to 424 residues: Serine--tRNA ligase (424 aa).

An L-serine-binding site is contributed by 231–233 (TAE). 262–264 (RSE) is a binding site for ATP. Glu-285 lines the L-serine pocket. 349–352 (EISS) is an ATP binding site. Ser-385 provides a ligand contact to L-serine.

It belongs to the class-II aminoacyl-tRNA synthetase family. Type-1 seryl-tRNA synthetase subfamily. Homodimer. The tRNA molecule binds across the dimer.

The protein resides in the cytoplasm. The enzyme catalyses tRNA(Ser) + L-serine + ATP = L-seryl-tRNA(Ser) + AMP + diphosphate + H(+). The catalysed reaction is tRNA(Sec) + L-serine + ATP = L-seryl-tRNA(Sec) + AMP + diphosphate + H(+). It participates in aminoacyl-tRNA biosynthesis; selenocysteinyl-tRNA(Sec) biosynthesis; L-seryl-tRNA(Sec) from L-serine and tRNA(Sec): step 1/1. Functionally, catalyzes the attachment of serine to tRNA(Ser). Is also able to aminoacylate tRNA(Sec) with serine, to form the misacylated tRNA L-seryl-tRNA(Sec), which will be further converted into selenocysteinyl-tRNA(Sec). The polypeptide is Serine--tRNA ligase (Bacillus pumilus (strain SAFR-032)).